The primary structure comprises 938 residues: Isoleucine--tRNA ligase (938 aa).

Residues 58-68 (PYANGNIHIGH) carry the 'HIGH' region motif. E561 lines the L-isoleucyl-5'-AMP pocket. The short motif at 602-606 (KMSKS) is the 'KMSKS' region element. An ATP-binding site is contributed by K605. Residues C901, C904, C921, and C924 each contribute to the Zn(2+) site.

Belongs to the class-I aminoacyl-tRNA synthetase family. IleS type 1 subfamily. In terms of assembly, monomer. Zn(2+) serves as cofactor.

The protein resides in the cytoplasm. It carries out the reaction tRNA(Ile) + L-isoleucine + ATP = L-isoleucyl-tRNA(Ile) + AMP + diphosphate. Catalyzes the attachment of isoleucine to tRNA(Ile). As IleRS can inadvertently accommodate and process structurally similar amino acids such as valine, to avoid such errors it has two additional distinct tRNA(Ile)-dependent editing activities. One activity is designated as 'pretransfer' editing and involves the hydrolysis of activated Val-AMP. The other activity is designated 'posttransfer' editing and involves deacylation of mischarged Val-tRNA(Ile). This is Isoleucine--tRNA ligase from Yersinia pestis bv. Antiqua (strain Angola).